Reading from the N-terminus, the 338-residue chain is Replication factor C subunit 3 (338 aa).

ATP is bound at residue Gly57–Thr64.

The protein belongs to the activator 1 small subunits family. In terms of assembly, heteropentamer of subunits RFC1, RFC2, RFC3, RFC4 and RFC5 that forms a complex with PCNA in the presence of ATP.

It is found in the nucleus. Its function is as follows. The elongation of primed DNA templates by DNA polymerase delta and epsilon requires the action of the accessory proteins proliferating cell nuclear antigen (PCNA) and activator 1. Subunit 3 binds ATP. In Blastobotrys adeninivorans (Yeast), this protein is Replication factor C subunit 3 (RFC3).